A 220-amino-acid chain; its full sequence is Deoxyribose-phosphate aldolase 2 (220 aa).

Catalysis depends on Asp-89, which acts as the Proton donor/acceptor. The active-site Schiff-base intermediate with acetaldehyde is Lys-151. Lys-180 acts as the Proton donor/acceptor in catalysis.

This sequence belongs to the DeoC/FbaB aldolase family. DeoC type 1 subfamily.

It is found in the cytoplasm. The enzyme catalyses 2-deoxy-D-ribose 5-phosphate = D-glyceraldehyde 3-phosphate + acetaldehyde. The protein operates within carbohydrate degradation; 2-deoxy-D-ribose 1-phosphate degradation; D-glyceraldehyde 3-phosphate and acetaldehyde from 2-deoxy-alpha-D-ribose 1-phosphate: step 2/2. Functionally, catalyzes a reversible aldol reaction between acetaldehyde and D-glyceraldehyde 3-phosphate to generate 2-deoxy-D-ribose 5-phosphate. The sequence is that of Deoxyribose-phosphate aldolase 2 from Staphylococcus aureus (strain MRSA252).